We begin with the raw amino-acid sequence, 494 residues long: 4-trimethylaminobutyraldehyde dehydrogenase (494 aa).

Ser2 carries the post-translational modification N-acetylserine; in 4-trimethylaminobutyraldehyde dehydrogenase, N-terminally processed. Lys30 carries the post-translational modification N6-acetyllysine; alternate. Lys30 carries the N6-succinyllysine; alternate modification. Lys59 bears the N6-succinyllysine mark. NAD(+) contacts are provided by residues Lys180 and 232 to 236 (GSVPT). Residue Glu254 is the Proton acceptor of the active site. Residue Cys288 is the Nucleophile of the active site. N6-acetyllysine is present on Lys298. An N6-acetyllysine; alternate modification is found at Lys303. An N6-succinyllysine; alternate modification is found at Lys303. Lys344 is subject to N6-acetyllysine. Glu391 lines the NAD(+) pocket.

This sequence belongs to the aldehyde dehydrogenase family. As to quaternary structure, homotetramer. Detected in brain (at protein level). High expression in adult liver, skeletal muscle, and kidney. Low levels in heart, pancreas, lung and brain. Expressed in all regions of the brain. Expression levels are variable in the different brain areas, with the highest levels in the spinal cord and the lowest in the occipital pole.

It localises to the cytoplasm. The protein localises to the cytosol. The catalysed reaction is 4-(trimethylamino)butanal + NAD(+) + H2O = 4-(trimethylamino)butanoate + NADH + 2 H(+). It catalyses the reaction an aldehyde + NAD(+) + H2O = a carboxylate + NADH + 2 H(+). It carries out the reaction 4-aminobutanal + NAD(+) + H2O = 4-aminobutanoate + NADH + 2 H(+). The enzyme catalyses formaldehyde + NAD(+) + H2O = formate + NADH + 2 H(+). The catalysed reaction is acetaldehyde + NAD(+) + H2O = acetate + NADH + 2 H(+). It catalyses the reaction imidazole-4-acetaldehyde + NAD(+) + H2O = imidazole-4-acetate + NADH + 2 H(+). It carries out the reaction acrolein + NAD(+) + H2O = acrylate + NADH + 2 H(+). The enzyme catalyses (5-hydroxyindol-3-yl)acetaldehyde + NAD(+) + H2O = (5-hydroxyindol-3-yl)acetate + NADH + 2 H(+). The catalysed reaction is 3,4-dihydroxyphenylacetaldehyde + NAD(+) + H2O = 3,4-dihydroxyphenylacetate + NADH + 2 H(+). It catalyses the reaction spermine monoaldehyde + NAD(+) + H2O = N-(2-carboxyethyl)spermidine + NADH + 2 H(+). It carries out the reaction propanal + NAD(+) + H2O = propanoate + NADH + 2 H(+). The enzyme catalyses butanal + NAD(+) + H2O = butanoate + NADH + 2 H(+). The catalysed reaction is pentanal + NAD(+) + H2O = pentanoate + NADH + 2 H(+). It catalyses the reaction hexanal + NAD(+) + H2O = hexanoate + NADH + 2 H(+). The protein operates within amine and polyamine biosynthesis; carnitine biosynthesis. In terms of biological role, converts gamma-trimethylaminobutyraldehyde into gamma-butyrobetaine with high efficiency (in vitro). Can catalyze the irreversible oxidation of a broad range of aldehydes to the corresponding acids in an NAD-dependent reaction, but with low efficiency. Catalyzes the oxidation of aldehydes arising from biogenic amines and polyamines. The chain is 4-trimethylaminobutyraldehyde dehydrogenase (ALDH9A1) from Homo sapiens (Human).